Reading from the N-terminus, the 156-residue chain is Transcription antitermination protein NusB (156 aa).

Belongs to the NusB family.

Its function is as follows. Involved in transcription antitermination. Required for transcription of ribosomal RNA (rRNA) genes. Binds specifically to the boxA antiterminator sequence of the ribosomal RNA (rrn) operons. The protein is Transcription antitermination protein NusB of Vibrio cholerae serotype O1 (strain ATCC 39541 / Classical Ogawa 395 / O395).